The sequence spans 566 residues: Hemocyanin B chain (566 aa).

A disulfide bond links Cys-82 and Cys-87. Positions 183, 187, 213, 309, 313, and 347 each coordinate Cu cation.

The protein belongs to the tyrosinase family. Hemocyanin subfamily. Hemolymph.

The protein localises to the secreted. The protein resides in the extracellular space. Its function is as follows. Hemocyanins are copper-containing oxygen carriers occurring freely dissolved in the hemolymph of many mollusks and arthropods. The protein is Hemocyanin B chain of Astacus leptodactylus (Turkish narrow-clawed crayfish).